Consider the following 218-residue polypeptide: E3 ubiquitin-protein ligase MARCHF3 (218 aa).

The RING-CH-type zinc-finger motif lies at 63–123 (SPFNDRPMCR…ELCHFRFAVE (61 aa)). Positions 71, 74, 87, 89, 97, 100, 113, and 116 each coordinate Zn(2+). 2 helical membrane passes run 145–165 (LFGD…SGWL) and 180–200 (LEAV…LFWT).

Interacts with MARCHF2 and STX6.

It is found in the cytoplasmic vesicle membrane. It localises to the early endosome membrane. It catalyses the reaction S-ubiquitinyl-[E2 ubiquitin-conjugating enzyme]-L-cysteine + [acceptor protein]-L-lysine = [E2 ubiquitin-conjugating enzyme]-L-cysteine + N(6)-ubiquitinyl-[acceptor protein]-L-lysine.. It participates in protein modification; protein ubiquitination. Functionally, E3 ubiquitin-protein ligase which may be involved in endosomal trafficking. E3 ubiquitin ligases accept ubiquitin from an E2 ubiquitin-conjugating enzyme in the form of a thioester and then directly transfer the ubiquitin to targeted substrates. The sequence is that of E3 ubiquitin-protein ligase MARCHF3 (Marchf3) from Mus musculus (Mouse).